Consider the following 261-residue polypeptide: Chanoclavine-I dehydrogenase easD (261 aa).

An N-terminal signal peptide occupies residues 1–20; that stretch reads MPSMTSKVFAITGGASGIGA. I18 is a binding site for NADP(+). Residue N43 is glycosylated (N-linked (GlcNAc...) asparagine). The NADP(+) site is built by D66, R132, Y166, K170, and T201. Y166 serves as the catalytic Proton donor. The active-site Lowers pKa of active site Tyr is K170.

It belongs to the short-chain dehydrogenases/reductases (SDR) family. Homotetramer.

The enzyme catalyses chanoclavine-I + NAD(+) = chanoclavine-I aldehyde + NADH + H(+). It functions in the pathway alkaloid biosynthesis; ergot alkaloid biosynthesis. Chanoclavine-I dehydrogenase; part of the gene cluster that mediates the biosynthesis of fungal ergot alkaloid. DmaW catalyzes the first step of ergot alkaloid biosynthesis by condensing dimethylallyl diphosphate (DMAP) and tryptophan to form 4-dimethylallyl-L-tryptophan. The second step is catalyzed by the methyltransferase easF that methylates 4-dimethylallyl-L-tryptophan in the presence of S-adenosyl-L-methionine, resulting in the formation of 4-dimethylallyl-L-abrine. The catalase easC and the FAD-dependent oxidoreductase easE then transform 4-dimethylallyl-L-abrine to chanoclavine-I which is further oxidized by easD in the presence of NAD(+), resulting in the formation of chanoclavine-I aldehyde. Agroclavine dehydrogenase easG then mediates the conversion of chanoclavine-I aldehyde to agroclavine via a non-enzymatic adduct reaction: the substrate is an iminium intermediate that is formed spontaneously from chanoclavine-I aldehyde in the presence of glutathione. The presence of easA is not required to complete this reaction. Further conversion of agroclavine to paspalic acid is a two-step process involving oxidation of agroclavine to elymoclavine and of elymoclavine to paspalic acid, the second step being performed by the elymoclavine oxidase cloA. Paspalic acid is then further converted to D-lysergic acid. Ergopeptines are assembled from D-lysergic acid and three different amino acids by the D-lysergyl-peptide-synthetases composed each of a monomudular and a trimodular nonribosomal peptide synthetase subunit. LpsB and lpsC encode the monomodular subunits responsible for D-lysergic acid activation and incorporation into the ergopeptine backbone. LpsA1 and A2 subunits encode the trimodular nonribosomal peptide synthetase assembling the tripeptide portion of ergopeptines. LpsA1 is responsible for formation of the major ergopeptine, ergotamine, and lpsA2 for alpha-ergocryptine, the minor ergopeptine of the total alkaloid mixture elaborated by C.purpurea. D-lysergyl-tripeptides are assembled by the nonribosomal peptide synthetases and released as N-(D-lysergyl-aminoacyl)-lactams. Cyclolization of the D-lysergyl-tripeptides is performed by the Fe(2+)/2-ketoglutarate-dependent dioxygenase easH which introduces a hydroxyl group into N-(D-lysergyl-aminoacyl)-lactam at alpha-C of the aminoacyl residue followed by spontaneous condensation with the terminal lactam carbonyl group. This Claviceps purpurea (Ergot fungus) protein is Chanoclavine-I dehydrogenase easD.